The primary structure comprises 287 residues: ATP synthase gamma chain (287 aa).

It belongs to the ATPase gamma chain family. In terms of assembly, F-type ATPases have 2 components, CF(1) - the catalytic core - and CF(0) - the membrane proton channel. CF(1) has five subunits: alpha(3), beta(3), gamma(1), delta(1), epsilon(1). CF(0) has three main subunits: a, b and c.

It localises to the cell inner membrane. Its function is as follows. Produces ATP from ADP in the presence of a proton gradient across the membrane. The gamma chain is believed to be important in regulating ATPase activity and the flow of protons through the CF(0) complex. In Sodalis glossinidius (strain morsitans), this protein is ATP synthase gamma chain.